A 490-amino-acid chain; its full sequence is GTPase Der (490 aa).

EngA-type G domains lie at 3–166 (PVVA…MDDV) and 203–376 (IKLA…DSST). GTP is bound by residues 9–16 (GRPNVGKS), 56–60 (DTGGI), 118–121 (NKTD), 209–216 (GRPNVGKS), 256–260 (DTAGV), and 321–324 (NKWD). Residues 377–461 (RRVSTAMLTR…PIRIQFKEGE (85 aa)) enclose the KH-like domain.

The protein belongs to the TRAFAC class TrmE-Era-EngA-EngB-Septin-like GTPase superfamily. EngA (Der) GTPase family. As to quaternary structure, associates with the 50S ribosomal subunit.

Its function is as follows. GTPase that plays an essential role in the late steps of ribosome biogenesis. The sequence is that of GTPase Der from Citrobacter koseri (strain ATCC BAA-895 / CDC 4225-83 / SGSC4696).